The primary structure comprises 319 residues: Thioredoxin reductase (319 aa).

FAD is bound at residue threonine 36–glutamine 43. A disulfide bond links cysteine 136 and cysteine 139. Residue aspartate 288–alanine 297 coordinates FAD.

It belongs to the class-II pyridine nucleotide-disulfide oxidoreductase family. In terms of assembly, homodimer. FAD serves as cofactor.

The protein localises to the cytoplasm. It catalyses the reaction [thioredoxin]-dithiol + NADP(+) = [thioredoxin]-disulfide + NADPH + H(+). This chain is Thioredoxin reductase (trxB), found in Buchnera aphidicola subsp. Schizaphis graminum (strain Sg).